We begin with the raw amino-acid sequence, 189 residues long: Protein seele (189 aa).

The first 17 residues, 1 to 17 (MLTKALILFGLLALAQG), serve as a signal peptide directing secretion. The 154-residue stretch at 23–176 (REVKCHVCKA…EQASYCDESP (154 aa)) folds into the Saposin B-type domain. 3 disulfide bridges follow: cysteine 27–cysteine 172, cysteine 30–cysteine 165, and cysteine 85–cysteine 136. The short motif at 186-189 (KEEL) is the Prevents secretion from ER element.

It belongs to the canopy family.

It is found in the endoplasmic reticulum. Involved in embryonic dorsal-ventral patterning which is generated by a series of serine protease processing events where gd processes snk which cleaves ea which then processes spz into the activating ligand for the Toll receptor. Required during this process for the secretion of ea from the developing embryo into the perivitelline space and for ea processing. This is Protein seele from Drosophila melanogaster (Fruit fly).